Reading from the N-terminus, the 333-residue chain is MSKGSAWGRPVTAPACMEVQIGAVRYRRDGALLLAASSLSSRTWGGSIWVFKDPEGAPNESLCTAGVQTEAGVTDVAWVSEKGILVASDSGAVELWEILEKESLLVNKFAKYEHDDIVKTLSVFSDGTQAVSGGKDFSVKVWDLSQKAVLKSYNAHSSEVNCVAACPGKDTIFLSCGEDGRILLWDTRKPKPATRIDFCASDTIPTSVTWHPEKDDTFACGDETGNVSLVNIKNPDSAQTSAVHSQNITGLAYSYHSSPFLASISEDCTVAVLDADFSEVFRDLSHRDFVTGVAWSPLDHSKFTTVGWDHKVLHHHLPSEGRTENLIATKAED.

7 WD repeats span residues 16-59 (CMEV…GAPN), 68-106 (QTEA…SLLV), 113-152 (EHDD…VLKS), 155-195 (AHSS…PATR), 199-240 (CASD…SAQT), 243-283 (VHSQ…VFRD), and 285-328 (SHRD…NLIA).

As to quaternary structure, heterotetramer; dimer of heterodimer with prmt5. Interacts with histone h2a and h4 and with nucleoplasmin. Detected in egg (at protein level).

The protein localises to the cytoplasm. Its subcellular location is the nucleus. In terms of biological role, non-catalytic component of the 20S prmt5-containing methyltransferase complex, which modifies specific arginines to dimethylarginines in several spliceosomal Sm proteins and histones. Required for normal prmt5 methyltransferase activity. The polypeptide is Methylosome protein WDR77 (Xenopus laevis (African clawed frog)).